The chain runs to 644 residues: Chaperone protein DnaK (644 aa).

At Thr-199 the chain carries Phosphothreonine; by autocatalysis. A disordered region spans residues 605 to 644; sequence KKSSEGQAAQGQTQSQESTKPAEEGVVDAEFEEVKEEDKK. The segment covering 609–623 has biased composition (polar residues); the sequence is EGQAAQGQTQSQEST. Residues 629 to 644 show a composition bias toward acidic residues; it reads GVVDAEFEEVKEEDKK.

This sequence belongs to the heat shock protein 70 family.

Functionally, acts as a chaperone. The polypeptide is Chaperone protein DnaK (Legionella pneumophila subsp. pneumophila (strain Philadelphia 1 / ATCC 33152 / DSM 7513)).